Here is a 363-residue protein sequence, read N- to C-terminus: MSGNTFGKLFTVTTAGESHGPALVAIVDGCPPGLELDLQDLQRDLDRRKPGTSRHTTQRQEADEVEILSGVFEGKTTGASIGLLIRNTDQKSKDYSAIKDLFRPAHADYTYHHKYGIRDYRGGGRSSARETAMRVAAGAIAKKYLASQGIVIRGYMSQLGPIQIPFKTWDSVEDNAFFCPDPDKVPELEAYMDQLRRDQDSVGAKITVVADGVMPGLGEPIFDRLDAELAHALMSINAVKGVEIGAGFDCVAQRGTEHRDEMTPQGFLSNHAGGILGGISSGQPIIAHLALKPTSSITTPGRSIDVDGNAADVITKGRHDPCVGIRATPIAEAMMAIVLLDHLLRHRGQNADVSVNTPVLGQV.

Residues Arg-48 and Arg-54 each contribute to the NADP(+) site. Residues 125–127 (RSS), 237–238 (NA), Gly-277, 292–296 (KPTSS), and Arg-318 each bind FMN.

Belongs to the chorismate synthase family. As to quaternary structure, homotetramer. FMNH2 is required as a cofactor.

It catalyses the reaction 5-O-(1-carboxyvinyl)-3-phosphoshikimate = chorismate + phosphate. It participates in metabolic intermediate biosynthesis; chorismate biosynthesis; chorismate from D-erythrose 4-phosphate and phosphoenolpyruvate: step 7/7. Catalyzes the anti-1,4-elimination of the C-3 phosphate and the C-6 proR hydrogen from 5-enolpyruvylshikimate-3-phosphate (EPSP) to yield chorismate, which is the branch point compound that serves as the starting substrate for the three terminal pathways of aromatic amino acid biosynthesis. This reaction introduces a second double bond into the aromatic ring system. This Pseudomonas syringae pv. syringae (strain B728a) protein is Chorismate synthase.